Consider the following 507-residue polypeptide: ATP synthase subunit alpha, chloroplastic (507 aa).

G170–T177 is a binding site for ATP.

The protein belongs to the ATPase alpha/beta chains family. F-type ATPases have 2 components, CF(1) - the catalytic core - and CF(0) - the membrane proton channel. CF(1) has five subunits: alpha(3), beta(3), gamma(1), delta(1), epsilon(1). CF(0) has four main subunits: a, b, b' and c.

It is found in the plastid. The protein resides in the chloroplast thylakoid membrane. The catalysed reaction is ATP + H2O + 4 H(+)(in) = ADP + phosphate + 5 H(+)(out). Functionally, produces ATP from ADP in the presence of a proton gradient across the membrane. The alpha chain is a regulatory subunit. This chain is ATP synthase subunit alpha, chloroplastic, found in Oryza nivara (Indian wild rice).